The following is an 891-amino-acid chain: Mating-type protein A-alpha Z3 (891 aa).

The segment at residues Glu111 to His189 is a DNA-binding region (homeobox; TALE-type). Positions Ala331–Arg360 are enriched in basic and acidic residues. Disordered stretches follow at residues Ala331–Asp592, Tyr606–Thr671, Ser779–Ser812, and Pro836–Thr861. Acidic residues-rich tracts occupy residues Ser369–Asp400 and Ala427–Thr457. 2 stretches are compositionally biased toward low complexity: residues Pro542–Thr559 and Ser612–Ser650. The segment covering Thr651–Ser660 has biased composition (polar residues). Basic and acidic residues predominate over residues Arg841 to Ala850.

Belongs to the TALE/M-ATYP homeobox family.

The protein resides in the nucleus. Specifies A-alpha-3 mating-type. May regulate the expression of genes specific to the homokaryotic cell type. The sequence is that of Mating-type protein A-alpha Z3 from Schizophyllum commune (Split gill fungus).